The chain runs to 214 residues: Ribosomal RNA small subunit methyltransferase G (214 aa).

Residues glycine 81, methionine 86, 132 to 133 (AE), and arginine 147 contribute to the S-adenosyl-L-methionine site.

Belongs to the methyltransferase superfamily. RNA methyltransferase RsmG family.

The protein localises to the cytoplasm. It catalyses the reaction guanosine(527) in 16S rRNA + S-adenosyl-L-methionine = N(7)-methylguanosine(527) in 16S rRNA + S-adenosyl-L-homocysteine. Functionally, specifically methylates the N7 position of guanine in position 527 of 16S rRNA. The protein is Ribosomal RNA small subunit methyltransferase G of Pseudomonas syringae pv. syringae (strain B728a).